The primary structure comprises 215 residues: Peroxiredoxin 1 (215 aa).

A Thioredoxin domain is found at 1 to 157 (MKLYQKFPET…LLRITKAALV (157 aa)). Residue Cys45 is the Cysteine sulfenic acid (-SOH) intermediate of the active site. Substrate is bound at residue Arg120.

The protein belongs to the peroxiredoxin family. Prx6 subfamily. In terms of assembly, homodecamer. Pentamer of dimers that assemble into a ring structure.

Its subcellular location is the cytoplasm. It carries out the reaction a hydroperoxide + [thioredoxin]-dithiol = an alcohol + [thioredoxin]-disulfide + H2O. Functionally, thiol-specific peroxidase that catalyzes the reduction of hydrogen peroxide and organic hydroperoxides to water and alcohols, respectively. Plays a role in cell protection against oxidative stress by detoxifying peroxides. This is Peroxiredoxin 1 from Sulfuracidifex metallicus (Sulfolobus metallicus).